A 265-amino-acid polypeptide reads, in one-letter code: H-2 class II histocompatibility antigen, A-D beta chain (265 aa).

The N-terminal stretch at 1–27 (MALQIPSLLLSAAVVVLMVLSSPRTEG) is a signal peptide. Positions 28 to 122 (GNSERHFVVQ…PETSTSLRRL (95 aa)) are beta-1. At 28-226 (GNSERHFVVQ…RAQSESARSK (199 aa)) the chain is on the extracellular side. 2 cysteine pairs are disulfide-bonded: Cys42–Cys106 and Cys145–Cys201. Residue Asn46 is glycosylated (N-linked (GlcNAc...) asparagine). The segment at 123–216 (EQPNVAISLS…SLKSPITVEW (94 aa)) is beta-2. Residues 125-213 (PNVAISLSRT…EHPSLKSPIT (89 aa)) form the Ig-like C1-type domain. The tract at residues 217-226 (RAQSESARSK) is connecting peptide. A helical membrane pass occupies residues 227–247 (MLSGIGGCVLGVIFLGLGLFI). The Cytoplasmic segment spans residues 248–265 (RHRSQKGPRGPPPAGLLQ).

The protein belongs to the MHC class II family. Post-translationally, ubiquitinated in immature dendritic cells leading to down-regulation of MHC class II.

It is found in the membrane. The protein is H-2 class II histocompatibility antigen, A-D beta chain (H2-Ab1) of Mus musculus (Mouse).